A 483-amino-acid chain; its full sequence is Trigger factor (483 aa).

A PPIase FKBP-type domain is found at 162 to 243 (GDYVSLDLSA…VRGVKEKELP (82 aa)). The tract at residues 459–483 (AVAPGDGDATVEPVEPVEAETDGNG) is disordered. The segment covering 473–483 (EPVEAETDGNG) has biased composition (acidic residues).

Belongs to the FKBP-type PPIase family. Tig subfamily.

Its subcellular location is the cytoplasm. The enzyme catalyses [protein]-peptidylproline (omega=180) = [protein]-peptidylproline (omega=0). Functionally, involved in protein export. Acts as a chaperone by maintaining the newly synthesized protein in an open conformation. Functions as a peptidyl-prolyl cis-trans isomerase. This chain is Trigger factor, found in Frankia casuarinae (strain DSM 45818 / CECT 9043 / HFP020203 / CcI3).